Here is a 131-residue protein sequence, read N- to C-terminus: Profilin (131 aa).

The protein belongs to the profilin family. As to quaternary structure, occurs in many kinds of cells as a complex with monomeric actin in a 1:1 ratio.

The protein localises to the cytoplasm. It is found in the cytoskeleton. Functionally, binds to actin and affects the structure of the cytoskeleton. At high concentrations, profilin prevents the polymerization of actin, whereas it enhances it at low concentrations. By binding to PIP2, it inhibits the formation of IP3 and DG. The sequence is that of Profilin from Cucumis melo (Muskmelon).